A 241-amino-acid polypeptide reads, in one-letter code: Leucyl/phenylalanyl-tRNA--protein transferase (241 aa).

It belongs to the L/F-transferase family.

It localises to the cytoplasm. It carries out the reaction N-terminal L-lysyl-[protein] + L-leucyl-tRNA(Leu) = N-terminal L-leucyl-L-lysyl-[protein] + tRNA(Leu) + H(+). The catalysed reaction is N-terminal L-arginyl-[protein] + L-leucyl-tRNA(Leu) = N-terminal L-leucyl-L-arginyl-[protein] + tRNA(Leu) + H(+). It catalyses the reaction L-phenylalanyl-tRNA(Phe) + an N-terminal L-alpha-aminoacyl-[protein] = an N-terminal L-phenylalanyl-L-alpha-aminoacyl-[protein] + tRNA(Phe). Functionally, functions in the N-end rule pathway of protein degradation where it conjugates Leu, Phe and, less efficiently, Met from aminoacyl-tRNAs to the N-termini of proteins containing an N-terminal arginine or lysine. In Neisseria meningitidis serogroup B (strain ATCC BAA-335 / MC58), this protein is Leucyl/phenylalanyl-tRNA--protein transferase.